Reading from the N-terminus, the 506-residue chain is Maturase K (506 aa).

The protein belongs to the intron maturase 2 family. MatK subfamily.

It is found in the plastid. The protein resides in the chloroplast. In terms of biological role, usually encoded in the trnK tRNA gene intron. Probably assists in splicing its own and other chloroplast group II introns. The protein is Maturase K of Hydrangea macrophylla (Bigleaf hydrangea).